The sequence spans 609 residues: Kelch-like protein 20 (609 aa).

The BTB domain maps to 68–135 (CDVVLVVGAK…AYTSQITVEE (68 aa)). Residues 170 to 272 (CLGIRAFADT…SPKFLVGTVG (103 aa)) enclose the BACK domain. 6 Kelch repeats span residues 319–365 (VLFA…VLDD), 367–413 (LYAV…VLGG), 414–460 (FLYA…VLGG), 462–507 (LYAV…VYQD), 509–554 (IYAV…VVNG), and 556–601 (LMAV…VIKM).

In terms of assembly, component of the BCR(KLHL20) E3 ubiquitin ligase complex, at least composed of CUL3, KLHL20 and RBX1. Interacts with PDZ-RhoGEF/ARHGEF11, DAPK1, PML and CORO7. Interacts with F-actin. Interacts with IFN-gamma (IFNG). Interacts (via kelch repeats) with IVNS1ABP (via kelch repeats); this interaction blocks the assembly of CUL3-KLHL20 complex.

It is found in the cytoplasm. The protein resides in the perinuclear region. Its subcellular location is the nucleus. The protein localises to the golgi apparatus. It localises to the trans-Golgi network. It is found in the cell projection. The protein resides in the axon. Its subcellular location is the dendrite. It participates in protein modification; protein ubiquitination. Its function is as follows. Substrate-specific adapter of a BCR (BTB-CUL3-RBX1) E3 ubiquitin-protein ligase complex involved in interferon response and anterograde Golgi to endosome transport. The BCR(KLHL20) E3 ubiquitin ligase complex mediates the ubiquitination of DAPK1, leading to its degradation by the proteasome, thereby acting as a negative regulator of apoptosis. The BCR(KLHL20) E3 ubiquitin ligase complex also specifically mediates 'Lys-33'-linked ubiquitination. Involved in anterograde Golgi to endosome transport by mediating 'Lys-33'-linked ubiquitination of CORO7, promoting interaction between CORO7 and EPS15, thereby facilitating actin polymerization and post-Golgi trafficking. Also acts as a regulator of endothelial migration during angiogenesis by controlling the activation of Rho GTPases. The BCR(KLHL20) E3 ubiquitin ligase complex acts as a regulator of neurite outgrowth by mediating ubiquitination and degradation of PDZ-RhoGEF/ARHGEF11. The chain is Kelch-like protein 20 (KLHL20) from Bos taurus (Bovine).